Reading from the N-terminus, the 158-residue chain is N5-carboxyaminoimidazole ribonucleotide mutase (158 aa).

Residues Ser10, Asp13, and Arg40 each contribute to the substrate site.

It belongs to the AIR carboxylase family. Class I subfamily.

It catalyses the reaction 5-carboxyamino-1-(5-phospho-D-ribosyl)imidazole + H(+) = 5-amino-1-(5-phospho-D-ribosyl)imidazole-4-carboxylate. It participates in purine metabolism; IMP biosynthesis via de novo pathway; 5-amino-1-(5-phospho-D-ribosyl)imidazole-4-carboxylate from 5-amino-1-(5-phospho-D-ribosyl)imidazole (N5-CAIR route): step 2/2. Catalyzes the conversion of N5-carboxyaminoimidazole ribonucleotide (N5-CAIR) to 4-carboxy-5-aminoimidazole ribonucleotide (CAIR). This chain is N5-carboxyaminoimidazole ribonucleotide mutase, found in Saccharolobus solfataricus (strain ATCC 35092 / DSM 1617 / JCM 11322 / P2) (Sulfolobus solfataricus).